The chain runs to 246 residues: Putative protein phosphatase 2C-type (246 aa).

The PPM-type phosphatase domain maps to 2-240 (KISLKTDIGQ…DNITIALVHN (239 aa)). Positions 36, 37, 192, and 231 each coordinate Mn(2+).

It depends on Mg(2+) as a cofactor. Mn(2+) serves as cofactor.

It carries out the reaction O-phospho-L-seryl-[protein] + H2O = L-seryl-[protein] + phosphate. The catalysed reaction is O-phospho-L-threonyl-[protein] + H2O = L-threonyl-[protein] + phosphate. This chain is Putative protein phosphatase 2C-type, found in Streptococcus pyogenes serotype M6 (strain ATCC BAA-946 / MGAS10394).